The chain runs to 139 residues: Large ribosomal subunit protein uL16 (139 aa).

It belongs to the universal ribosomal protein uL16 family. As to quaternary structure, part of the 50S ribosomal subunit.

Binds 23S rRNA and is also seen to make contacts with the A and possibly P site tRNAs. The chain is Large ribosomal subunit protein uL16 from Crocosphaera subtropica (strain ATCC 51142 / BH68) (Cyanothece sp. (strain ATCC 51142)).